A 364-amino-acid chain; its full sequence is F-box/LRR-repeat protein At1g55660 (364 aa).

One can recognise an F-box domain in the interval 52–98 (MDKISQLPDELLVKVLSFLSTKDAVSTSILSMRWKSLWMWLPKLEYN). LRR repeat units lie at residues 158 to 179 (NVRELSLKLFNFAELPTKLPKS), 185 to 206 (SIVILKLKDEILVDVPRKVCLP), 207 to 228 (SLKTLFLGRVTYSDANSLHRLL), 233 to 254 (VLEDLVMERDKIDNLGKLSVIV), 256 to 277 (SLQRLTLKMSRPCHLDGLKMNS), and 279 to 300 (SLKYLKVIDERLESDSDDESDS).

This chain is F-box/LRR-repeat protein At1g55660, found in Arabidopsis thaliana (Mouse-ear cress).